A 107-amino-acid polypeptide reads, in one-letter code: Proteinase inhibitor 1 (107 aa).

The first 23 residues, 1–23, serve as a signal peptide directing secretion; the sequence is MELKFAHIIVFFLLATSFETLMA. The propeptide occupies 24–36; sequence RKESDGPEVIQLL.

Belongs to the protease inhibitor I13 (potato type I serine protease inhibitor) family.

This is Proteinase inhibitor 1 from Solanum tuberosum (Potato).